A 170-amino-acid chain; its full sequence is Large ribosomal subunit protein uL11 (170 aa).

Belongs to the universal ribosomal protein uL11 family. As to quaternary structure, part of the ribosomal stalk of the 50S ribosomal subunit. Interacts with L10 and the large rRNA to form the base of the stalk. L10 forms an elongated spine to which L12 dimers bind in a sequential fashion forming a multimeric L10(L12)X complex.

In terms of biological role, forms part of the ribosomal stalk which helps the ribosome interact with GTP-bound translation factors. In Desulfurococcus amylolyticus (strain DSM 18924 / JCM 16383 / VKM B-2413 / 1221n) (Desulfurococcus kamchatkensis), this protein is Large ribosomal subunit protein uL11.